The chain runs to 682 residues: Potassium-transporting ATPase ATP-binding subunit (682 aa).

Helical transmembrane passes span 34 to 54 (PVMF…IAMA), 62 to 82 (ALFS…ANFA), 219 to 239 (IALT…TATL), and 254 to 274 (VLVA…LSAI). Catalysis depends on D307, which acts as the 4-aspartylphosphate intermediate. Residues D344, E348, 377-384 (FTAQSRMS), and K395 contribute to the ATP site. Mg(2+) contacts are provided by D518 and D522. 3 helical membrane passes run 588–608 (FAII…LNIM), 616–636 (AILS…PLAL), and 656–676 (IYGL…DLLL).

The protein belongs to the cation transport ATPase (P-type) (TC 3.A.3) family. Type IA subfamily. In terms of assembly, the system is composed of three essential subunits: KdpA, KdpB and KdpC.

Its subcellular location is the cell inner membrane. The catalysed reaction is K(+)(out) + ATP + H2O = K(+)(in) + ADP + phosphate + H(+). Its function is as follows. Part of the high-affinity ATP-driven potassium transport (or Kdp) system, which catalyzes the hydrolysis of ATP coupled with the electrogenic transport of potassium into the cytoplasm. This subunit is responsible for energy coupling to the transport system and for the release of the potassium ions to the cytoplasm. The sequence is that of Potassium-transporting ATPase ATP-binding subunit from Shigella sonnei (strain Ss046).